The chain runs to 876 residues: MAMPSYSSLSSHISITTTHTRPHPIFPCYYDTQSIPRFFISSDTGSSASKQRNIYLRLGSRKIIAGVGEGATSLSSHSDKMKTDSFPDPKLAKRDFPPGFWKDDIIDSIMSSNKVAAADEERVETLISEIKSMFRGMGDGETTPSAYDTAWVAKIPALDGSDHPHFPQTLQWILLNQLKDGSWGEEHHFLTYDRLLATLACIITLTVWRTGKTQVQKGIEFFKKHAGMMEDEADHRQPSGFEFVFPAMINEAKSLCLDLPYELPFIKQIIKKREAKLKRIPTDLLYTVPTIFLYYLEGLQEIVEWHKIIKLQSKDGSFLSSPASTAAVFMSTGNTKCLEFLNFVLMKFGNHAPCHYPIDLLERLWAVDTVQRLGIDRYFKEEIKEALDYIYSHWGERGIGWARENPVADIGVTAMGLRILRLNGYNVSSDVLRTFRDENGEFFSFMGQTERGVIDMLNLNRCSHVAFPGETVMEEAKHCTERYLWNALEDVDALDKWGLKKNIRGEVEYALKYPWLRSLPRLEARSYIENYGPNDAWLGKTMYIMPYINNGKYLELAKLDFNNVQSIHQKELRELRRWWKSSGFAELNFTRDRVAEIFFSIASSMFEPELATCRAVYTKSTICTVILDDLYDAHGSVEDIKLFNEAVKRWDLFLLDRMPEHIKICFLGLYNLVNEIAEEGRKRQGRDVLGYIRNLWEIQLETFMKEAEWSEAKYVPSFHEYIETASVSIAGATLVLFGVLFTGEVLTDHILSQIDYRSKFAYLMGLTGRLINDTKTYQAERGEGEVASAIQCYMKDHPEFSEEEALKQIYTLMENALADLKEEFLKAKDVPDKCKRLVFDYARSMQLFYQQGDGFTLAPNMEIKQHVKKILFEPVP.

The N-terminal 64 residues, 1–64, are a transit peptide targeting the chloroplast; it reads MAMPSYSSLS…YLRLGSRKII (64 aa). 5 residues coordinate Mg(2+): Asp-628, Asp-632, Asn-772, Thr-776, and Glu-780. Positions 628–632 match the DDXXD motif motif; it reads DDLYD.

This sequence belongs to the terpene synthase family. Tpsd subfamily. Requires Mg(2+) as cofactor.

The protein localises to the plastid. It localises to the chloroplast. It carries out the reaction (+)-copalyl diphosphate = isopimara-7,15-diene + diphosphate. The protein operates within terpene metabolism; oleoresin biosynthesis. In terms of biological role, involved in defensive oleoresin formation in conifers in response to insect attack or other injury. Involved in diterpene (C20) olefins biosynthesis. Monofunctional enzyme lacking the DXDD motif in the class II active site relevant for the cyclization of geranylgeranyl diphosphate (GGPP). Requires (+)-copalyl diphosphate ((+)-CPP) as substrate, but no activity with GGPP or ent-CPP. Isopimaradiene is the major products of the enzyme followed by sandaracopimaradiene. In Pinus banksiana (Jack pine), this protein is Monofunctional isopimaradiene synthase, chloroplastic.